Here is a 249-residue protein sequence, read N- to C-terminus: tRNA pseudouridine synthase A (249 aa).

D53 functions as the Nucleophile in the catalytic mechanism. Y111 contributes to the substrate binding site.

Belongs to the tRNA pseudouridine synthase TruA family. In terms of assembly, homodimer.

It catalyses the reaction uridine(38/39/40) in tRNA = pseudouridine(38/39/40) in tRNA. Formation of pseudouridine at positions 38, 39 and 40 in the anticodon stem and loop of transfer RNAs. This Streptococcus pyogenes serotype M3 (strain ATCC BAA-595 / MGAS315) protein is tRNA pseudouridine synthase A.